We begin with the raw amino-acid sequence, 267 residues long: MVETRLGWEAGGGLGAPGGPGGKLGGLGLAVGGTHSWSGLLKRVDRREARAQPRLLVLGCLLCQGISCPSCGPDMFVSLQKSLIDVFINAASLSHDFHNLSTIMFNEFDEKYAQGKLYYINATKSCHTNSFHTPEERDKAQQMNNEDLSKWTLVLLYSWNNPLYYLLLELRNMKNLSEAVISSAMEIENMSEKLQAFIESQFRKIIVPVLKMIHEVSNTWSRFSSMTFSDEDRSISEYYNLFYCLRRDSRKVDMYIKILTCRTRKTC.

N-linked (GlcNAc...) asparagine glycans are attached at residues Asn-99 and Asn-121. 2 disulfide bridges follow: Cys-126-Cys-244 and Cys-261-Cys-267.

This sequence belongs to the somatotropin/prolactin family.

It localises to the secreted. Placental prolactin-related proteins may play a specific role during gestation. The protein is Placental prolactin-related protein 2 (PRP2) of Bos taurus (Bovine).